A 218-amino-acid chain; its full sequence is MVQNKLKKSVGWAALKYVQSSRIIGVGTGSTVTYFIEALNSIKEKIEGVVSSSNYSSNQLKKIGIPLCNLNSLHELDVYVDSADEIDSHMQMIKGKGGALTKEKIIAAAAKKFICIVDSSKQVNILGRGPLPIEVIPMARSLVARELVRLGGLPEYRHNVITDNGNNILDVYNMKIVNASLLETKINNIPGVVSVGIFAKRRADIVLIGTREGIKIIE.

Substrate is bound by residues 28–31 (TGST), 81–84 (DSAD), and 94–97 (KGKG). Residue E103 is the Proton acceptor of the active site. Position 121 (K121) interacts with substrate.

The protein belongs to the ribose 5-phosphate isomerase family. In terms of assembly, homodimer.

It catalyses the reaction aldehydo-D-ribose 5-phosphate = D-ribulose 5-phosphate. The protein operates within carbohydrate degradation; pentose phosphate pathway; D-ribose 5-phosphate from D-ribulose 5-phosphate (non-oxidative stage): step 1/1. In terms of biological role, catalyzes the reversible conversion of ribose-5-phosphate to ribulose 5-phosphate. In Blochmanniella pennsylvanica (strain BPEN), this protein is Ribose-5-phosphate isomerase A.